A 231-amino-acid chain; its full sequence is Histone H1 (231 aa).

Over residues 1 to 17 (MSDPAIEVAPVPVASPA) the composition is skewed to low complexity. 2 disordered regions span residues 1-44 (MSDP…PVSD) and 124-231 (TKKV…AKKA). The region spanning 38–112 (THPPVSDMIV…GASGSFKLPA (75 aa)) is the H15 domain. Composition is skewed to basic residues over residues 145–171 (KVKK…KTTK), 178–213 (PTKK…KAKK), and 221–231 (KAAKKPSAKKA).

It belongs to the histone H1/H5 family.

It is found in the nucleus. The protein resides in the chromosome. In terms of biological role, histones H1 are necessary for the condensation of nucleosome chains into higher-order structures. The sequence is that of Histone H1 from Chironomus thummi thummi (Midge).